We begin with the raw amino-acid sequence, 643 residues long: Translation factor GUF1, mitochondrial (643 aa).

The N-terminal 18 residues, 1–18 (MLASQAIKRIFHRSWKPL), are a transit peptide targeting the mitochondrion. The 184-residue stretch at 43–226 (ENYRNFSIVA…AIIDRIPPPT (184 aa)) folds into the tr-type G domain. GTP is bound by residues 52 to 59 (AHIDHGKS), 118 to 122 (DTPGH), and 172 to 175 (NKID).

Belongs to the TRAFAC class translation factor GTPase superfamily. Classic translation factor GTPase family. LepA subfamily.

The protein resides in the mitochondrion inner membrane. The catalysed reaction is GTP + H2O = GDP + phosphate + H(+). Its function is as follows. Promotes mitochondrial protein synthesis. May act as a fidelity factor of the translation reaction, by catalyzing a one-codon backward translocation of tRNAs on improperly translocated ribosomes. Binds to mitochondrial ribosomes in a GTP-dependent manner. This is Translation factor GUF1, mitochondrial from Zygosaccharomyces rouxii (strain ATCC 2623 / CBS 732 / NBRC 1130 / NCYC 568 / NRRL Y-229).